Reading from the N-terminus, the 458-residue chain is Elongation factor 1-alpha (458 aa).

Residue Gly-2 is modified to N,N,N-trimethylglycine. Lys-3 carries the N6,N6-dimethyllysine; alternate modification. Lys-3 carries the post-translational modification N6-methyllysine; alternate. In terms of domain architecture, tr-type G spans Lys-5 to Thr-240. Positions Gly-14–Ser-21 are G1. Gly-14–Ser-21 is a binding site for GTP. Lys-30 is subject to N6-methyllysine. A G2 region spans residues Gly-70 to Asp-74. Residue Lys-79 is modified to N6,N6,N6-trimethyllysine. Positions Asp-91–Gly-94 are G3. Residues Asp-91 to His-95 and Asn-153 to Asp-156 each bind GTP. A G4 region spans residues Asn-153–Asp-156. Residues Ser-192 to Trp-194 are G5. Lys-316 carries the N6,N6-dimethyllysine; alternate modification. An N6-methyllysine; alternate modification is found at Lys-316. Lys-390 carries the post-translational modification N6-methyllysine.

This sequence belongs to the TRAFAC class translation factor GTPase superfamily. Classic translation factor GTPase family. EF-Tu/EF-1A subfamily.

The protein resides in the cytoplasm. It functions in the pathway protein biosynthesis; polypeptide chain elongation. This protein promotes the GTP-dependent binding of aminoacyl-tRNA to the A-site of ribosomes during protein biosynthesis. This Meyerozyma guilliermondii (strain ATCC 6260 / CBS 566 / DSM 6381 / JCM 1539 / NBRC 10279 / NRRL Y-324) (Yeast) protein is Elongation factor 1-alpha (TEF1).